Here is a 504-residue protein sequence, read N- to C-terminus: Anaerobic nitric oxide reductase transcription regulator NorR (504 aa).

At D57 the chain carries 4-aspartylphosphate. The Sigma-54 factor interaction domain maps to 187–416 (MIGLSPGMTQ…LEHAIHRAVV (230 aa)). ATP is bound by residues 215–222 (GETGTGKE) and 278–287 (ADNGTLFLDE). The segment at residues 479–498 (WAASARMLETDVANLHRLAK) is a DNA-binding region (H-T-H motif).

Its pathway is nitrogen metabolism; nitric oxide reduction. Required for the expression of anaerobic nitric oxide (NO) reductase, acts as a transcriptional activator for at least the norVW operon. Activation also requires sigma-54. The polypeptide is Anaerobic nitric oxide reductase transcription regulator NorR (Escherichia coli O7:K1 (strain IAI39 / ExPEC)).